The following is a 139-amino-acid chain: ATP synthase epsilon chain (139 aa).

The protein belongs to the ATPase epsilon chain family. F-type ATPases have 2 components, CF(1) - the catalytic core - and CF(0) - the membrane proton channel. CF(1) has five subunits: alpha(3), beta(3), gamma(1), delta(1), epsilon(1). CF(0) has three main subunits: a, b and c.

The protein localises to the cell inner membrane. Functionally, produces ATP from ADP in the presence of a proton gradient across the membrane. The protein is ATP synthase epsilon chain of Pseudomonas putida (strain GB-1).